Consider the following 283-residue polypeptide: Serine/threonine-protein phosphatase Pgam5, mitochondrial (283 aa).

The helical transmembrane segment at 7 to 23 threads the bilayer; it reads MYGLPSAAVAVGTALLN.

The protein belongs to the phosphoglycerate mutase family. BPG-dependent PGAM subfamily. In terms of assembly, interacts with skn-1.

The protein localises to the mitochondrion outer membrane. The catalysed reaction is O-phospho-L-seryl-[protein] + H2O = L-seryl-[protein] + phosphate. The enzyme catalyses O-phospho-L-threonyl-[protein] + H2O = L-threonyl-[protein] + phosphate. Displays phosphatase activity for serine/threonine residues. Has apparently no phosphoglycerate mutase activity. This is Serine/threonine-protein phosphatase Pgam5, mitochondrial (pgam-5) from Caenorhabditis briggsae.